A 252-amino-acid polypeptide reads, in one-letter code: 2-succinyl-6-hydroxy-2,4-cyclohexadiene-1-carboxylate synthase (252 aa).

Belongs to the AB hydrolase superfamily. MenH family. In terms of assembly, monomer.

It carries out the reaction 5-enolpyruvoyl-6-hydroxy-2-succinyl-cyclohex-3-ene-1-carboxylate = (1R,6R)-6-hydroxy-2-succinyl-cyclohexa-2,4-diene-1-carboxylate + pyruvate. The protein operates within quinol/quinone metabolism; 1,4-dihydroxy-2-naphthoate biosynthesis; 1,4-dihydroxy-2-naphthoate from chorismate: step 3/7. Its pathway is quinol/quinone metabolism; menaquinone biosynthesis. In terms of biological role, catalyzes a proton abstraction reaction that results in 2,5-elimination of pyruvate from 2-succinyl-5-enolpyruvyl-6-hydroxy-3-cyclohexene-1-carboxylate (SEPHCHC) and the formation of 2-succinyl-6-hydroxy-2,4-cyclohexadiene-1-carboxylate (SHCHC). This Escherichia coli (strain UTI89 / UPEC) protein is 2-succinyl-6-hydroxy-2,4-cyclohexadiene-1-carboxylate synthase.